The sequence spans 215 residues: LexA repressor (215 aa).

The segment at residues 28 to 48 (RAEIAAELGFSSPNAAEEHLR) is a DNA-binding region (H-T-H motif). Active-site for autocatalytic cleavage activity residues include serine 133 and lysine 170.

It belongs to the peptidase S24 family. As to quaternary structure, homodimer.

The enzyme catalyses Hydrolysis of Ala-|-Gly bond in repressor LexA.. Its function is as follows. Represses a number of genes involved in the response to DNA damage (SOS response), including recA and lexA. In the presence of single-stranded DNA, RecA interacts with LexA causing an autocatalytic cleavage which disrupts the DNA-binding part of LexA, leading to derepression of the SOS regulon and eventually DNA repair. The protein is LexA repressor of Burkholderia ambifaria (strain MC40-6).